The following is a 1086-amino-acid chain: Transcription initiation factor TFIID subunit 2 (1086 aa).

The span at 1–11 (MDFSEASTSGD) shows a compositional bias: polar residues. 2 disordered regions span residues 1-53 (MDFS…PPPV) and 1064-1086 (GYEA…NLMQ). Pro residues-rich tracts occupy residues 19-36 (PFPP…PPLA) and 44-53 (APPPLQPPPV). The span at 1067 to 1078 (AARRSPPRRDFG) shows a compositional bias: basic and acidic residues.

The protein belongs to the TAF2 family. Component of the TFIID basal transcription factor complex, composed of TATA-box-binding protein tbp-1, and a number of TBP-associated factors (TAFs).

Its subcellular location is the nucleus. Functionally, the TFIID basal transcription factor complex plays a major role in the initiation of RNA polymerase II (Pol II)-dependent transcription. TFIID recognizes and binds promoters via its subunit tbp-1, a TATA-box-binding protein, and promotes assembly of the pre-initiation complex (PIC). The TFIID complex consists of tbp-1 and TBP-associated factors (TAFs), including taf-2. May regulate RNA polymerase II activity and thereby may control transcription initiation by RNA polymerase II. The protein is Transcription initiation factor TFIID subunit 2 of Caenorhabditis elegans.